We begin with the raw amino-acid sequence, 1050 residues long: DNA ligase 4 (1050 aa).

The tract at residues 1-22 (MNTNRRSRSPDEEALEEDQHQY) is disordered. ATP is bound by residues glutamate 329, lysine 331, leucine 332, arginine 336, glutamate 398, phenylalanine 438, glutamate 498, lysine 503, lysine 520, and lysine 522. Lysine 331 functions as the N6-AMP-lysine intermediate in the catalytic mechanism. Glutamate 398 lines the Mg(2+) pocket. Glutamate 498 is a binding site for Mg(2+). Residues 691–702 (QEQERKKMEMEN) are compositionally biased toward basic and acidic residues. Residues 691 to 711 (QEQERKKMEMENRKRKPATKR) form a disordered region. BRCT domains follow at residues 742 to 840 (ASKR…KENK) and 936 to 1049 (LRSF…EYVA).

It belongs to the ATP-dependent DNA ligase family. Mg(2+) serves as cofactor.

The protein localises to the nucleus. It carries out the reaction ATP + (deoxyribonucleotide)n-3'-hydroxyl + 5'-phospho-(deoxyribonucleotide)m = (deoxyribonucleotide)n+m + AMP + diphosphate.. DNA ligase involved in DNA non-homologous end joining (NHEJ); required for double-strand break (DSB) repair. This Neurospora crassa (strain ATCC 24698 / 74-OR23-1A / CBS 708.71 / DSM 1257 / FGSC 987) protein is DNA ligase 4 (mus-53).